The following is a 102-amino-acid chain: Small ribosomal subunit protein uS10 (102 aa).

Belongs to the universal ribosomal protein uS10 family. As to quaternary structure, part of the 30S ribosomal subunit.

Its function is as follows. Involved in the binding of tRNA to the ribosomes. The chain is Small ribosomal subunit protein uS10 from Halalkalibacterium halodurans (strain ATCC BAA-125 / DSM 18197 / FERM 7344 / JCM 9153 / C-125) (Bacillus halodurans).